The chain runs to 313 residues: Short-chain dehydrogenase/reductase family 9C member 7 (313 aa).

Position 29 to 53 (29 to 53) interacts with NADP(+); the sequence is FITGCDSGFGNLLAKQLVDRGMQVL. Substrate is bound at residue serine 160. Tyrosine 172 (proton acceptor) is an active-site residue. The residue at position 185 (serine 185) is a Phosphoserine.

The protein belongs to the short-chain dehydrogenases/reductases (SDR) family. Expressed in the skin. Expressed in granular and cornified layers of the epidermis (at protein level). Highly expressed in liver.

The protein localises to the cytoplasm. It catalyses the reaction a N-[omega-(9R,10R)-epoxy-(13R)-hydroxy-(11E)-octadecenoyloxy]acyl-beta-D-glucosyl-(1&lt;-&gt;1)-sphing-4E-enine + NAD(+) = a N-[omega-(9R,10R)-epoxy-13-oxo-(11E)-octadecenoyloxy]acyl-beta-D-glucosyl-(1&lt;-&gt;1)-sphing-4E-enine + NADH + H(+). The enzyme catalyses a N-[omega-(9R,10R)-epoxy-(13R)-hydroxy-(11E)-octadecenoyloxy]-acylsphing-4E-enine + NAD(+) = a N-[omega-(9R,10R)-epoxy-13-oxo-(11E)-octadecenoyloxy]-acylsphing-4E-enine + NADH + H(+). Plays a crucial role in the formation of the epidermal permeability barrier. Catalyzes the NAD+-dependent dehydrogenation of the linoleate 9,10-trans-epoxy-11E-13-alcohol esterified in omega-O-acylceramides (such as in N-[omega-(9R,10R)-epoxy-(13R)-hydroxy-(11E)-octadecenoyloxy]-acylsphing-4E-enine) to the corresponding 13-ketone, the reactive moiety required for binding of epidermal ceramides to proteins. Displays weak conversion of all-trans-retinal to all-trans-retinol in the presence of NADH. Has apparently no steroid dehydrogenase activity. In Homo sapiens (Human), this protein is Short-chain dehydrogenase/reductase family 9C member 7 (SDR9C7).